We begin with the raw amino-acid sequence, 274 residues long: Large ribosomal subunit protein uL2cz/uL2cy (274 aa).

Disordered stretches follow at residues Met1 to Lys23 and Met223 to Lys274. Residues Lys7–Lys23 show a composition bias toward polar residues.

The protein belongs to the universal ribosomal protein uL2 family. As to quaternary structure, part of the 50S ribosomal subunit.

It is found in the plastid. It localises to the chloroplast. This is Large ribosomal subunit protein uL2cz/uL2cy (rpl2-A) from Nandina domestica (Heavenly bamboo).